We begin with the raw amino-acid sequence, 234 residues long: Synaptogyrin-4 (234 aa).

In terms of domain architecture, MARVEL spans 18–169 (FLKRPKAITR…QAYLAFQELR (152 aa)). 4 helical membrane-spanning segments follow: residues 25–45 (ITRI…LTDG), 66–86 (CSIA…FLAL), 104–124 (LLDL…FCFL), and 145–165 (AAIT…YLAF). Residues 191–226 (SPPSAASPVNTPTTGPHGPSYASSSLSPYLSTPKAP) are disordered. Low complexity predominate over residues 209-221 (PSYASSSLSPYLS).

Belongs to the synaptogyrin family.

Its subcellular location is the membrane. This chain is Synaptogyrin-4 (SYNGR4), found in Bos taurus (Bovine).